Consider the following 458-residue polypeptide: MKEYKTVSKVAGPLLFVEKTEPVSYEEQVSLVLADGTMKRGQVLDTSEDLVVVQCFETTTGLGRDTGVRFLGETFKMPVSKTMLGRILSGGGKPIDGGPAIVPDKRLDINGAAINPYARGTPRDFIQTGISTIDGTNTLVRGQKLPIFSSAGLPHNEIALQIARQAKVPGSSDEFAVVFAAMGITREEANYFMADFERTGALERAVVFLNLADDPAVERTVTPRLALTTAEYLAYELGYHVLVILTDMTNYCEALRQIGAAREEVPGRRGYPGYMYTDLASIYERAGIIKGLKGSVTQIPILTMPGDDITHPIPDLTGYITEGQIVISPELHRKGIYPPINVLPSLSRLMNLGIGKGMTREDHKKVSDMMYSGYAEGVDLRGLVAIVGKDALSERDQKFLEFADAFEDKFVRQGSDEDRTIAQTLDVGWGMFTQLPESELEKRIDRDLIKTYHPNYRK.

Belongs to the ATPase alpha/beta chains family. As to quaternary structure, has multiple subunits with at least A(3), B(3), C, D, E, F, H, I and proteolipid K(x).

The protein resides in the cell membrane. Its function is as follows. Component of the A-type ATP synthase that produces ATP from ADP in the presence of a proton gradient across the membrane. The B chain is a regulatory subunit. The chain is A-type ATP synthase subunit B from Methanocorpusculum labreanum (strain ATCC 43576 / DSM 4855 / Z).